We begin with the raw amino-acid sequence, 142 residues long: Large ribosomal subunit protein uL13 (142 aa).

The protein belongs to the universal ribosomal protein uL13 family. As to quaternary structure, part of the 50S ribosomal subunit.

Functionally, this protein is one of the early assembly proteins of the 50S ribosomal subunit, although it is not seen to bind rRNA by itself. It is important during the early stages of 50S assembly. This Cellvibrio japonicus (strain Ueda107) (Pseudomonas fluorescens subsp. cellulosa) protein is Large ribosomal subunit protein uL13.